The primary structure comprises 284 residues: Tropomyosin (284 aa).

Residues 1–284 (MDAIKKKMQA…DMTFTELIGN (284 aa)) adopt a coiled-coil conformation.

It belongs to the tropomyosin family. In terms of assembly, homodimer.

Functionally, tropomyosin, in association with the troponin complex, plays a central role in the calcium dependent regulation of muscle contraction. The chain is Tropomyosin from Periplaneta fuliginosa (Smokybrown cockroach).